The chain runs to 175 residues: Hypoxanthine-guanine phosphoribosyltransferase (175 aa).

Diphosphate is bound by residues lysine 40 and glycine 41. Positions 96 and 97 each coordinate Mg(2+). Residue aspartate 100 is the Proton acceptor of the active site. GMP contacts are provided by residues lysine 128, 149 to 150, and aspartate 156; that span reads FL. Arginine 162 is a diphosphate binding site.

The protein belongs to the purine/pyrimidine phosphoribosyltransferase family. Mg(2+) is required as a cofactor.

The protein localises to the cytoplasm. It carries out the reaction IMP + diphosphate = hypoxanthine + 5-phospho-alpha-D-ribose 1-diphosphate. It catalyses the reaction GMP + diphosphate = guanine + 5-phospho-alpha-D-ribose 1-diphosphate. Its pathway is purine metabolism; IMP biosynthesis via salvage pathway; IMP from hypoxanthine: step 1/1. The protein operates within purine metabolism; GMP biosynthesis via salvage pathway; GMP from guanine: step 1/1. Functionally, purine salvage pathway enzyme that catalyzes the transfer of the ribosyl-5-phosphate group from 5-phospho-alpha-D-ribose 1-diphosphate (PRPP) to the N9 position of the 6-oxopurines hypoxanthine and guanine to form the corresponding ribonucleotides IMP (inosine 5'-monophosphate) and GMP (guanosine 5'-monophosphate), with the release of PPi. This Mycoplasma pneumoniae (strain ATCC 29342 / M129 / Subtype 1) (Mycoplasmoides pneumoniae) protein is Hypoxanthine-guanine phosphoribosyltransferase (hpt).